A 225-amino-acid polypeptide reads, in one-letter code: Small ribosomal subunit protein uS3 (225 aa).

Positions 38–106 constitute a KH type-2 domain; that stretch reads IRRFLQKKFK…PIGMNIIEVK (69 aa).

This sequence belongs to the universal ribosomal protein uS3 family. As to quaternary structure, part of the 30S ribosomal subunit. Forms a tight complex with proteins S10 and S14.

Functionally, binds the lower part of the 30S subunit head. Binds mRNA in the 70S ribosome, positioning it for translation. The sequence is that of Small ribosomal subunit protein uS3 from Leptospira biflexa serovar Patoc (strain Patoc 1 / Ames).